The primary structure comprises 364 residues: MDSSRTIGLYFDSALPSSNLLAFPIVLQDIGDGKKQIAPQYRIQRLDSWTDSKEDSVFITTYGFIFQVGNEEVTVGMISDNPKHELLSAAMLCLGSVPNVGDLVELARACLTMVVTCKKSATDTERMVFSVVQAPQVLQSCRVVANKYSSVNAVKHVKAPEKIPGSGTLEYKVNFVSLTVVPRKDVYKIPTAALKVSGSSLYNLALNVTIDVEVDPKSPLVKSLSKSDSGYYANLFLHIGLMSTVDKKGKKVTFDKLERKIRRLDLSVGLSDVLGPSVLVKARGARTRLLAPFFSSSGTACYPISNASPQVAKILWSQTARLRSVKVIIQAGTQRAVAVTADHEVTSTKIEKRHTIAKYNPFKK.

The FPIV motif motif lies at F23–V26.

This sequence belongs to the morbillivirus/respirovirus/rubulavirus M protein family.

The protein resides in the virion. The M protein has a crucial role in virus assembly and interacts with the RNP complex as well as with the viral membrane. The polypeptide is Matrix protein (M) (Gallus gallus (Chicken)).